A 422-amino-acid polypeptide reads, in one-letter code: Phospholipase D Z (422 aa).

Positions 1-18 (MMMKLLFLIALFGCVVNS) are cleaved as a signal peptide. Residue Asn-53 is glycosylated (N-linked (GlcNAc...) asparagine). In terms of domain architecture, PLD phosphodiesterase 1 spans 148–175 (GAGILHTKVIVVDQVSAYLGSANLDWRS). Active-site residues include His-153, Lys-155, and Asp-160. Residues Asn-225 and Asn-320 are each glycosylated (N-linked (GlcNAc...) asparagine). In terms of domain architecture, PLD phosphodiesterase 2 spans 357–383 (FTRVNHAKYMVTDEQSYVGTSNWSEDY). Active-site residues include His-362, Lys-364, and Asp-369. N-linked (GlcNAc...) asparagine glycosylation occurs at Asn-378.

This sequence belongs to the phospholipase D family.

It catalyses the reaction a 1,2-diacyl-sn-glycero-3-phosphocholine + H2O = a 1,2-diacyl-sn-glycero-3-phosphate + choline + H(+). Its activity is regulated as follows. Inhibited by butan-1-ol. In terms of biological role, hydrolyzes membrane phospholipids, such as PtdCho (phosphatidylcholine), producing the free headgroup and PtdOH (phosphatidic acid; signaling molecule on its own). The protein is Phospholipase D Z (pldZ) of Dictyostelium discoideum (Social amoeba).